A 1233-amino-acid chain; its full sequence is uncharacterized protein (1233 aa).

Disordered stretches follow at residues 1 to 39 (MVES…PSTN), 65 to 116 (QELS…DAIS), 160 to 211 (AEGT…TDLS), 250 to 577 (EKMD…DAPR), 594 to 825 (DLEV…NSEK), 851 to 872 (NKEN…NSEK), and 902 to 955 (EDVE…ENSK). The span at 72-83 (KSSKLKGHKKKN) shows a compositional bias: basic residues. Residue Ser-180 is modified to Phosphoserine. The segment covering 183–199 (TRRKKNKKKKTTNRRGR) has biased composition (basic residues). Positions 201-211 (SSNPADTTDLS) are enriched in polar residues. Basic and acidic residues-rich tracts occupy residues 250-280 (EKMD…ETSS) and 287-300 (NEEK…REEN). Over residues 329–345 (GQASTKDVESESLTKNG) the composition is skewed to polar residues. 2 stretches are compositionally biased toward basic and acidic residues: residues 349–370 (KENE…DRDG) and 379–408 (NQKE…ELSV). Residues 409–422 (NHENNMSHNFNAAG) are compositionally biased toward polar residues. Ser-462 carries the phosphoserine modification. A compositionally biased stretch (acidic residues) spans 466-478 (EKEEEEEEEEEEN). Basic and acidic residues-rich tracts occupy residues 484-497 (VKKE…EAVR), 508-527 (STSK…EAGE), 594-622 (DLEV…DKIA), 631-672 (EDMK…KTPE), and 684-711 (RPED…DVKP). At Ser-523 the chain carries Phosphoserine. The segment covering 728 to 739 (QRVQISTEQAET) has biased composition (polar residues). Residues 753 to 783 (FKEEEKPKRFEITQEGDKITGKDTNHEHGEA) are compositionally biased toward basic and acidic residues. Positions 855 to 868 (EDVEVDTEEDAEVE) are enriched in acidic residues. Thr-861 carries the phosphothreonine modification. Basic and acidic residues-rich tracts occupy residues 910–920 (SKEDIETKCSE) and 935–948 (EVSK…TKED). Ser-975 carries the post-translational modification Phosphoserine. Disordered regions lie at residues 984–1071 (LPEL…PKKA) and 1109–1128 (KDST…KPQD). Basic and acidic residues predominate over residues 986–999 (ELEKQDIKDNKGED). Residues Ser-1037 and Ser-1046 each carry the phosphoserine modification. Composition is skewed to basic and acidic residues over residues 1062–1071 (QSTRENPKKA) and 1118–1127 (QSKKNNDKPQ). The Glutaredoxin domain occupies 1132–1233 (TSEIRKLNEK…KLRELIYDTI (102 aa)).

This is an uncharacterized protein from Saccharomyces cerevisiae (strain ATCC 204508 / S288c) (Baker's yeast).